A 174-amino-acid chain; its full sequence is Transcriptional repressor NrdR (174 aa).

The segment at Cys-3–Cys-34 is a zinc-finger region. In terms of domain architecture, ATP-cone spans Pro-49–Asp-139.

It belongs to the NrdR family. It depends on Zn(2+) as a cofactor.

Its function is as follows. Negatively regulates transcription of bacterial ribonucleotide reductase nrd genes and operons by binding to NrdR-boxes. This chain is Transcriptional repressor NrdR, found in Xanthomonas campestris pv. campestris (strain 8004).